A 481-amino-acid chain; its full sequence is Ankyrin repeat, SAM and basic leucine zipper domain-containing protein 1 (481 aa).

The span at 1-10 shows a compositional bias: low complexity; it reads MASGALRGLA. The interval 1 to 23 is disordered; the sequence is MASGALRGLAVAGGGESSDSEDD. Phosphoserine is present on residues S17, S18, and S20. ANK repeat units lie at residues 45 to 74, 78 to 107, 110 to 144, 148 to 177, 181 to 210, and 214 to 243; these read EKSE…SVDS, YGWT…NASF, DKQT…DPNI, RLMT…EVNA, NGYT…NKML, and DGKI…PLEG. The 63-residue stretch at 272–334 folds into the SAM domain; it reads SYTAFGDLEI…KILSALKELE (63 aa).

In terms of assembly, interacts with DDX4, PIWIL1, RANBP9 and TDRD1.

The protein localises to the cytoplasm. Plays a central role during spermatogenesis by repressing transposable elements and preventing their mobilization, which is essential for the germline integrity. Acts via the piRNA metabolic process, which mediates the repression of transposable elements during meiosis by forming complexes composed of piRNAs and Piwi proteins and governs the methylation and subsequent repression of transposons. Its association with pi-bodies suggests a participation in the primary piRNAs metabolic process. Required prior to the pachytene stage to facilitate the production of multiple types of piRNAs, including those associated with repeats involved in the regulation of retrotransposons. May act by mediating protein-protein interactions during germ cell maturation. The polypeptide is Ankyrin repeat, SAM and basic leucine zipper domain-containing protein 1 (ASZ1) (Eulemur macaco macaco (Black lemur)).